The sequence spans 194 residues: A-type ATP synthase subunit E (194 aa).

It belongs to the V-ATPase E subunit family. In terms of assembly, has multiple subunits with at least A(3), B(3), C, D, E, F, H, I and proteolipid K(x).

Its subcellular location is the cell membrane. In terms of biological role, component of the A-type ATP synthase that produces ATP from ADP in the presence of a proton gradient across the membrane. This chain is A-type ATP synthase subunit E, found in Saccharolobus islandicus (strain Y.N.15.51 / Yellowstone #2) (Sulfolobus islandicus).